Consider the following 141-residue polypeptide: MLLPKRTKYRKMMKGRNRGYATRGVDLALGEFGLKAVEAGRVNSRQIESARQAYTRHVKRQAKTWIRVFPDKPITKKPLETRMGKGKGGVEEWVMNIKPGRIIFEMSGVSEELAREALTLAMHKLPFKTKFVTKESENEVY.

It belongs to the universal ribosomal protein uL16 family. As to quaternary structure, part of the 50S ribosomal subunit.

Functionally, binds 23S rRNA and is also seen to make contacts with the A and possibly P site tRNAs. The chain is Large ribosomal subunit protein uL16 from Campylobacter fetus subsp. fetus (strain 82-40).